The sequence spans 231 residues: Small ribosomal subunit protein uS2c (231 aa).

The protein belongs to the universal ribosomal protein uS2 family.

It is found in the plastid. It localises to the chloroplast. This Gracilaria tenuistipitata var. liui (Red alga) protein is Small ribosomal subunit protein uS2c (rps2).